The following is a 386-amino-acid chain: Lipoyl synthase, mitochondrial (386 aa).

Residues 1 to 21 constitute a mitochondrion transit peptide; that stretch reads MISRNSILLRRLYPTTIIRTL. Residues cysteine 107, cysteine 112, cysteine 118, cysteine 137, cysteine 141, cysteine 144, and serine 352 each contribute to the [4Fe-4S] cluster site. Residues 122 to 341 enclose the Radical SAM core domain; sequence KKSEATATIM…RDTALDMGFL (220 aa).

It belongs to the radical SAM superfamily. Lipoyl synthase family. [4Fe-4S] cluster serves as cofactor.

Its subcellular location is the mitochondrion. It carries out the reaction [[Fe-S] cluster scaffold protein carrying a second [4Fe-4S](2+) cluster] + N(6)-octanoyl-L-lysyl-[protein] + 2 oxidized [2Fe-2S]-[ferredoxin] + 2 S-adenosyl-L-methionine + 4 H(+) = [[Fe-S] cluster scaffold protein] + N(6)-[(R)-dihydrolipoyl]-L-lysyl-[protein] + 4 Fe(3+) + 2 hydrogen sulfide + 2 5'-deoxyadenosine + 2 L-methionine + 2 reduced [2Fe-2S]-[ferredoxin]. The protein operates within protein modification; protein lipoylation via endogenous pathway; protein N(6)-(lipoyl)lysine from octanoyl-[acyl-carrier-protein]: step 2/2. Catalyzes the radical-mediated insertion of two sulfur atoms into the C-6 and C-8 positions of the octanoyl moiety bound to the lipoyl domains of lipoate-dependent enzymes, thereby converting the octanoylated domains into lipoylated derivatives. The sequence is that of Lipoyl synthase, mitochondrial (LAB5) from Candida albicans (strain SC5314 / ATCC MYA-2876) (Yeast).